A 242-amino-acid polypeptide reads, in one-letter code: Ubiquinone biosynthesis O-methyltransferase (242 aa).

S-adenosyl-L-methionine contacts are provided by Arg44, Gly64, Asp85, and Met129.

This sequence belongs to the methyltransferase superfamily. UbiG/COQ3 family.

It carries out the reaction a 3-demethylubiquinol + S-adenosyl-L-methionine = a ubiquinol + S-adenosyl-L-homocysteine + H(+). The catalysed reaction is a 3-(all-trans-polyprenyl)benzene-1,2-diol + S-adenosyl-L-methionine = a 2-methoxy-6-(all-trans-polyprenyl)phenol + S-adenosyl-L-homocysteine + H(+). Its pathway is cofactor biosynthesis; ubiquinone biosynthesis. Its function is as follows. O-methyltransferase that catalyzes the 2 O-methylation steps in the ubiquinone biosynthetic pathway. The polypeptide is Ubiquinone biosynthesis O-methyltransferase (Yersinia enterocolitica serotype O:8 / biotype 1B (strain NCTC 13174 / 8081)).